The chain runs to 102 residues: NADH-quinone oxidoreductase subunit K (102 aa).

Transmembrane regions (helical) follow at residues 6–26 (MEHG…GLMV), 30–50 (ILFV…AFVV), and 62–82 (IMFI…LAIL).

This sequence belongs to the complex I subunit 4L family. In terms of assembly, NDH-1 is composed of 13 different subunits. Subunits NuoA, H, J, K, L, M, N constitute the membrane sector of the complex.

It is found in the cell inner membrane. The enzyme catalyses a quinone + NADH + 5 H(+)(in) = a quinol + NAD(+) + 4 H(+)(out). Its function is as follows. NDH-1 shuttles electrons from NADH, via FMN and iron-sulfur (Fe-S) centers, to quinones in the respiratory chain. The immediate electron acceptor for the enzyme in this species is believed to be ubiquinone. Couples the redox reaction to proton translocation (for every two electrons transferred, four hydrogen ions are translocated across the cytoplasmic membrane), and thus conserves the redox energy in a proton gradient. This Azotobacter vinelandii (strain DJ / ATCC BAA-1303) protein is NADH-quinone oxidoreductase subunit K.